The chain runs to 258 residues: Aspartate/glutamate leucyltransferase (258 aa).

The protein belongs to the R-transferase family. Bpt subfamily.

It localises to the cytoplasm. The catalysed reaction is N-terminal L-glutamyl-[protein] + L-leucyl-tRNA(Leu) = N-terminal L-leucyl-L-glutamyl-[protein] + tRNA(Leu) + H(+). It catalyses the reaction N-terminal L-aspartyl-[protein] + L-leucyl-tRNA(Leu) = N-terminal L-leucyl-L-aspartyl-[protein] + tRNA(Leu) + H(+). Functionally, functions in the N-end rule pathway of protein degradation where it conjugates Leu from its aminoacyl-tRNA to the N-termini of proteins containing an N-terminal aspartate or glutamate. In Rhodopseudomonas palustris (strain ATCC BAA-98 / CGA009), this protein is Aspartate/glutamate leucyltransferase.